We begin with the raw amino-acid sequence, 308 residues long: Mitochondrial import receptor subunit TOM40B (308 aa).

Residues 1–29 form a disordered region; the sequence is MGNTLGLAPMGALPRRSPRREEPLPNPGS. The required for mitochondrial targeting stretch occupies residues 281–308; sequence PLPVTLALGAFLNHWRNRFHCGFSITVG.

This sequence belongs to the Tom40 family. As to quaternary structure, forms part of the preprotein translocase of the outer mitochondrial membrane (TOM complex) containing TOMM22, TOMM40, TOMM40L and TOMM70. Interacts with mitochondrial targeting sequences.

It localises to the mitochondrion outer membrane. Its function is as follows. Potential channel-forming protein implicated in import of protein precursors into mitochondria. This chain is Mitochondrial import receptor subunit TOM40B, found in Bos taurus (Bovine).